The sequence spans 55 residues: MAGPIREKIRLVSSAGTGHFYTTTKNKRLHPEKMETKKYDPVVRKHVAYKEAKIK.

It belongs to the bacterial ribosomal protein bL33 family.

The sequence is that of Large ribosomal subunit protein bL33 from Alcanivorax borkumensis (strain ATCC 700651 / DSM 11573 / NCIMB 13689 / SK2).